Consider the following 420-residue polypeptide: Exodeoxyribonuclease 7 large subunit (420 aa).

The protein belongs to the XseA family. In terms of assembly, heterooligomer composed of large and small subunits.

The protein resides in the cytoplasm. It carries out the reaction Exonucleolytic cleavage in either 5'- to 3'- or 3'- to 5'-direction to yield nucleoside 5'-phosphates.. In terms of biological role, bidirectionally degrades single-stranded DNA into large acid-insoluble oligonucleotides, which are then degraded further into small acid-soluble oligonucleotides. This is Exodeoxyribonuclease 7 large subunit from Helicobacter pylori (strain J99 / ATCC 700824) (Campylobacter pylori J99).